A 485-amino-acid polypeptide reads, in one-letter code: E3 ubiquitin-protein ligase TRIM34B (485 aa).

The RING-type zinc finger occupies 15–58; the sequence is CPVCQELLTKALSLGCGHLVCQACLISNKNAVINPRGKSSCPVC. The segment at 91 to 127 adopts a B box-type zinc-finger fold; that stretch reads TKRDLCVHHGEKLLLFCKEDKKVICWVCERSQEHRGH. Zn(2+) is bound by residues Cys-96, His-99, Cys-118, and His-124. Residues 136–170 are a coiled coil; it reads VRECQENLQKALTRLRKEQEKVETLEADIKEDRLS. Positions 282-485 constitute a B30.2/SPRY domain; it reads LSGMLQKFRE…APMTLCPLNS (204 aa).

The protein belongs to the TRIM/RBCC family. In terms of assembly, homotrimer. Interacts (via B-box and SPRY domain) with TRIM5.

The protein localises to the cytoplasm. The protein resides in the mitochondrion. The enzyme catalyses S-ubiquitinyl-[E2 ubiquitin-conjugating enzyme]-L-cysteine + [acceptor protein]-L-lysine = [E2 ubiquitin-conjugating enzyme]-L-cysteine + N(6)-ubiquitinyl-[acceptor protein]-L-lysine.. It functions in the pathway protein modification; protein ubiquitination. Functions as antiviral protein and contributes to the defense against retroviral infections. Acts as a capsid-specific restriction factor with the help of TRIM5 and prevents infection from non-host-adapted retroviruses. During influenza A virus infection, promotes programmed cell death by targeting ZBP1 for 'Lys-63'-linked polyubiquitination. In turn, promotes ZBP1 recruitment of RIPK3 to mediate virus-induced programmed necrosis. Negatively regulates the function of mitochondria by enhancing mitochondrial depolarization leading to cytochrome c release and mitochondria-dependent apoptosis. Also promotes the formation of multinucleated giant cells by means of cell fusion and phagocytosis in epithelial cells. Regulates intestinal inflammation by controlling the exocytosis of the major component of colonic mucus MUC2 from colonic goblet cells. The polypeptide is E3 ubiquitin-protein ligase TRIM34B (Mus musculus (Mouse)).